An 89-amino-acid polypeptide reads, in one-letter code: Small ribosomal subunit protein uS17 (89 aa).

It belongs to the universal ribosomal protein uS17 family. In terms of assembly, part of the 30S ribosomal subunit.

In terms of biological role, one of the primary rRNA binding proteins, it binds specifically to the 5'-end of 16S ribosomal RNA. The polypeptide is Small ribosomal subunit protein uS17 (Albidiferax ferrireducens (strain ATCC BAA-621 / DSM 15236 / T118) (Rhodoferax ferrireducens)).